The chain runs to 322 residues: NAD(P)H-dependent D-xylose reductase (322 aa).

Catalysis depends on Tyr52, which acts as the Proton donor. His114 provides a ligand contact to substrate. Residues 169–170 (SN), 218–227 (SSFGPQSFVE), and 274–284 (KSNLPERLVQN) each bind NAD(+).

This sequence belongs to the aldo/keto reductase family. Homodimer.

The catalysed reaction is xylitol + NAD(+) = D-xylose + NADH + H(+). It carries out the reaction xylitol + NADP(+) = D-xylose + NADPH + H(+). The protein operates within carbohydrate metabolism; D-xylose degradation. Functionally, reduces D-xylose into xylitol. Has a preference for NADPH, but can also utilize NADH as cosubstrate. This Candida tenuis (Yeast) protein is NAD(P)H-dependent D-xylose reductase (XYL1).